Reading from the N-terminus, the 688-residue chain is Probable glucan endo-1,3-beta-glucosidase btgC (688 aa).

3 disordered regions span residues 1–91 (MSGP…NLGP), 126–148 (ANIPAERGLSTTGSDNPYVPEPP), and 168–195 (GQLTPGQSVSHLSSTNPSQRNLYDIPYQ). At 1-307 (MSGPNRTYSF…PKPGGGNKKR (307 aa)) the chain is on the cytoplasmic side. Polar residues predominate over residues 175-188 (SVSHLSSTNPSQRN). A helical; Signal-anchor for type II membrane protein membrane pass occupies residues 308–328 (GWIVGAILAFIIIGAIVGGAV). Residues 329–688 (GGTIGHRGNE…IPDCGGKTAT (360 aa)) lie on the Extracellular side of the membrane. The segment at 334 to 363 (HRGNEEPSSASSASSSSTQTATEDTSVNGD) is disordered. Positions 341–355 (SSASSASSSSTQTAT) are enriched in low complexity. N-linked (GlcNAc...) asparagine glycans are attached at residues Asn408, Asn431, and Asn459. The active-site Proton donor is Glu491. The active-site Nucleophile is Glu590. Residues Asn609 and Asn635 are each glycosylated (N-linked (GlcNAc...) asparagine).

This sequence belongs to the glycosyl hydrolase 17 family.

It is found in the cell membrane. It carries out the reaction Hydrolysis of (1-&gt;3)-beta-D-glucosidic linkages in (1-&gt;3)-beta-D-glucans.. In terms of biological role, glucanases play a role in cell expansion during growth, in cell-cell fusion during mating, and in spore release during sporulation. This enzyme may be involved in beta-glucan degradation. Active on laminarin and lichenan. The polypeptide is Probable glucan endo-1,3-beta-glucosidase btgC (btgC) (Aspergillus fumigatus (strain ATCC MYA-4609 / CBS 101355 / FGSC A1100 / Af293) (Neosartorya fumigata)).